The following is a 69-amino-acid chain: Cell division protein ZapB (69 aa).

Residues 6-68 (LEQLEARVQS…LGKMDQMNSE (63 aa)) are a coiled coil.

Belongs to the ZapB family. Homodimer. The ends of the coiled-coil dimer bind to each other, forming polymers. Interacts with FtsZ.

Its subcellular location is the cytoplasm. Functionally, non-essential, abundant cell division factor that is required for proper Z-ring formation. It is recruited early to the divisome by direct interaction with FtsZ, stimulating Z-ring assembly and thereby promoting cell division earlier in the cell cycle. Its recruitment to the Z-ring requires functional FtsA or ZipA. The protein is Cell division protein ZapB of Tolumonas auensis (strain DSM 9187 / NBRC 110442 / TA 4).